Reading from the N-terminus, the 181-residue chain is Cyclic phosphodiesterase (181 aa).

His-42 serves as the catalytic Proton donor/acceptor. Thr-44 is a substrate binding site. Cystine bridges form between Cys-64-Cys-177 and Cys-104-Cys-110. The active-site Proton donor/acceptor is the His-119. Positions 121 and 124 each coordinate substrate.

It belongs to the 2H phosphoesterase superfamily. CPD1 family. As to expression, expressed in leaves, stems, roots, floral buds and germinating seeds.

The protein localises to the cytoplasm. The enzyme catalyses ADP-alpha-D-ribose 1'',2''-cyclic phosphate + H2O = ADP-alpha-D-ribose 1''-phosphate + H(+). It catalyses the reaction 2',3'-cyclophospho-AMP + H2O = adenosine 2'-phosphate + H(+). It carries out the reaction 2',3'-cyclophospho-GMP + H2O = guanosine 2'-phosphate + H(+). The catalysed reaction is 2',3'-cyclophospho-UMP + H2O = uridine 2'-phosphate + H(+). The enzyme catalyses 2',3'-cyclophospho-CMP + H2O = cytidine 2'-phosphate + H(+). With respect to regulation, inhibited by Cu(2+) and Zn(2+) at 0.5 mM by 93 and 87% respectively. Not inhibited by Ca(2+), Mg(2+), Co(2+), Ni(2+), and EDTA at 0.5 mM. Its function is as follows. Hydrolyzes ADP-ribose 1'',2''-cyclic phosphate (Appr&gt;1) that is produced during tRNA splicing into ADP-ribose 1''-phosphate (Appr-1''p). Also acts on nucleoside 2',3'-cyclic phosphates. This Arabidopsis thaliana (Mouse-ear cress) protein is Cyclic phosphodiesterase.